Here is a 790-residue protein sequence, read N- to C-terminus: Pleckstrin homology domain-containing family G member 6 (790 aa).

The disordered stretch occupies residues 63 to 91; it reads SGQARGLSPMRLRDPEPEKRHGGHVGAGL. Residues 73-82 are compositionally biased toward basic and acidic residues; sequence RLRDPEPEKR. The 193-residue stretch at 161–353 folds into the DH domain; that stretch reads HQQEALWELL…ESFLRHINGQ (193 aa). A PH domain is found at 409-509; that stretch reads QLLLEGPVRV…WLEKTQQAQA (101 aa). 2 stretches are compositionally biased toward basic and acidic residues: residues 529 to 538 and 625 to 635; these read LYRDQDRESP and ELRDIPLRPHP. 3 disordered regions span residues 529-677, 690-730, and 748-790; these read LYRD…ASER, LRGQ…HTSL, and SQRI…ASEV. The segment covering 748 to 762 has biased composition (basic and acidic residues); the sequence is SQRIEGAEEPRDSRP.

In terms of assembly, interacts with MYH10. Interacts with ELMO1 and EZR (in an open conformation). Interacts with CSPP1. Highest expression in the placenta. Low levels in small intestine, lung, liver, kidney, thymus and heart.

The protein resides in the cell projection. The protein localises to the microvillus. It is found in the cytoplasm. Its subcellular location is the cytoskeleton. It localises to the spindle. The protein resides in the spindle pole. The protein localises to the cleavage furrow. Functionally, guanine nucleotide exchange factor activating the small GTPase RHOA, which, in turn, induces myosin filament formation. Also activates RHOG. Does not activate RAC1, or to a much lower extent than RHOA and RHOG. Part of a functional unit, involving PLEKHG6, MYH10 and RHOA, at the cleavage furrow to advance furrow ingression during cytokinesis. In epithelial cells, required for the formation of microvilli and membrane ruffles on the apical pole. Along with EZR, required for normal macropinocytosis. This chain is Pleckstrin homology domain-containing family G member 6 (PLEKHG6), found in Homo sapiens (Human).